The primary structure comprises 473 residues: Ribulose bisphosphate carboxylase large chain (473 aa).

Residues Asn-116 and Thr-166 each contribute to the substrate site. The active-site Proton acceptor is Lys-168. Residue Lys-170 participates in substrate binding. 3 residues coordinate Mg(2+): Lys-194, Asp-196, and Glu-197. Lys-194 is modified (N6-carboxylysine). The Proton acceptor role is filled by His-287. Arg-288, His-320, and Ser-372 together coordinate substrate.

Belongs to the RuBisCO large chain family. Type I subfamily. Heterohexadecamer of 8 large chains and 8 small chains. Mg(2+) serves as cofactor.

The catalysed reaction is 2 (2R)-3-phosphoglycerate + 2 H(+) = D-ribulose 1,5-bisphosphate + CO2 + H2O. It carries out the reaction D-ribulose 1,5-bisphosphate + O2 = 2-phosphoglycolate + (2R)-3-phosphoglycerate + 2 H(+). Its function is as follows. RuBisCO catalyzes two reactions: the carboxylation of D-ribulose 1,5-bisphosphate, the primary event in carbon dioxide fixation, as well as the oxidative fragmentation of the pentose substrate. Both reactions occur simultaneously and in competition at the same active site. The protein is Ribulose bisphosphate carboxylase large chain of Rhodobacter capsulatus (strain ATCC BAA-309 / NBRC 16581 / SB1003).